Here is a 342-residue protein sequence, read N- to C-terminus: S-adenosylmethionine:tRNA ribosyltransferase-isomerase (342 aa).

The protein belongs to the QueA family. Monomer.

The protein localises to the cytoplasm. It carries out the reaction 7-aminomethyl-7-carbaguanosine(34) in tRNA + S-adenosyl-L-methionine = epoxyqueuosine(34) in tRNA + adenine + L-methionine + 2 H(+). The protein operates within tRNA modification; tRNA-queuosine biosynthesis. Functionally, transfers and isomerizes the ribose moiety from AdoMet to the 7-aminomethyl group of 7-deazaguanine (preQ1-tRNA) to give epoxyqueuosine (oQ-tRNA). The sequence is that of S-adenosylmethionine:tRNA ribosyltransferase-isomerase from Streptococcus agalactiae serotype III (strain NEM316).